Reading from the N-terminus, the 404-residue chain is Tryptophan synthase beta chain (404 aa).

Lysine 94 carries the N6-(pyridoxal phosphate)lysine modification.

It belongs to the TrpB family. As to quaternary structure, tetramer of two alpha and two beta chains. Requires pyridoxal 5'-phosphate as cofactor.

The enzyme catalyses (1S,2R)-1-C-(indol-3-yl)glycerol 3-phosphate + L-serine = D-glyceraldehyde 3-phosphate + L-tryptophan + H2O. The protein operates within amino-acid biosynthesis; L-tryptophan biosynthesis; L-tryptophan from chorismate: step 5/5. Its function is as follows. The beta subunit is responsible for the synthesis of L-tryptophan from indole and L-serine. This is Tryptophan synthase beta chain from Staphylococcus aureus (strain MRSA252).